A 109-amino-acid chain; its full sequence is Nucleoid-associated protein BCB4264_A0025 (109 aa).

This sequence belongs to the YbaB/EbfC family. Homodimer.

It is found in the cytoplasm. The protein resides in the nucleoid. Functionally, binds to DNA and alters its conformation. May be involved in regulation of gene expression, nucleoid organization and DNA protection. This chain is Nucleoid-associated protein BCB4264_A0025, found in Bacillus cereus (strain B4264).